Reading from the N-terminus, the 189-residue chain is MMKLFCLNIFRFLYTTSFISAVLSFNQRPINMQEVREPRLFELLAETRDCNIFSELIMQFPDYVHLFQQKDQHITVLVPNDAAFQQCKVKPWAIEYKNGVAVKSTDIVHITEQQAQDNILKFVERHIITSSPIEWNNEYKTIDGTDVHVIKKEEEIYINESIHVLCRKKASNGEMWVLNATLSTPSIRE.

Positions 1 to 24 (MMKLFCLNIFRFLYTTSFISAVLS) are cleaved as a signal peptide. The region spanning 37-182 (EPRLFELLAE…GEMWVLNATL (146 aa)) is the FAS1 domain.

The protein resides in the cytoplasm. The protein localises to the nucleus. It localises to the membrane. Functionally, has a role in sporulation. This chain is FAS1 domain-containing protein mug57 (mug57), found in Schizosaccharomyces pombe (strain 972 / ATCC 24843) (Fission yeast).